The chain runs to 351 residues: Nuclear inhibitor of protein phosphatase 1 (351 aa).

Positions 1-142 (MAAAVNSGSS…LPSAVKGDEK (142 aa)) are interaction with CDC5L, SF3B1 and MELK. Residues 49–101 (YLFGRNPDLCDFTIDHQSCSRVHAALVYHKHLKRVFLIDLNSTHGTFLGHIRL) enclose the FHA domain. The segment at 143–224 (MGGEDDELKG…VDPSVGRFRN (82 aa)) is interaction with EED. At T161 the chain carries Phosphothreonine. Phosphoserine is present on residues S178 and S199. 2 short sequence motifs (nuclear localization signal) span residues 185–209 (GNLD…DDEI) and 210–240 (INPE…RMEG). The tract at residues 191–200 (RPKRKRKNSR) is involved in PP-1 inhibition. Residues 200-203 (RVTF) form an involved in PP-1 binding region. S204 carries the post-translational modification Phosphoserine. Residue S249 is modified to Phosphoserine. Y264 carries the post-translational modification Phosphotyrosine. Residues 310-329 (AVAINPTPNPAVYNPEAVNE) are interaction with EED. A disordered region spans residues 314 to 351 (NPTPNPAVYNPEAVNEPKKKKYAKEAWPGKKPTPSLLI). The interval 330–351 (PKKKKYAKEAWPGKKPTPSLLI) is RNA-binding. Positions 331 to 337 (KKKKYAK) are involved in PP-1 inhibition. Position 335 is a phosphotyrosine (Y335).

In terms of assembly, interacts with phosphorylated CDC5L, SF3B1 and MELK. Part of the spliceosome. Interacts with PPP1CA, PPP1CB and PPP1CC. Interacts with EED. Part of a complex consisting of PPP1R8, EED, HDAC2 and PP-1. Post-translationally, may be inactivated by phosphorylation on Ser-199 or Ser-204.

It is found in the nucleus. Its subcellular location is the nucleus speckle. Functionally, inhibitor subunit of the major nuclear protein phosphatase-1 (PP-1). It has RNA-binding activity but does not cleave RNA and may target PP-1 to RNA-associated substrates. May also be involved in pre-mRNA splicing. Binds DNA and might act as a transcriptional repressor. Essential for cell proliferation and early embryonic development. This is Nuclear inhibitor of protein phosphatase 1 (Ppp1r8) from Mus musculus (Mouse).